Consider the following 312-residue polypeptide: tRNA pseudouridine synthase B (312 aa).

Residue aspartate 48 is the Nucleophile of the active site.

Belongs to the pseudouridine synthase TruB family. Type 1 subfamily.

The catalysed reaction is uridine(55) in tRNA = pseudouridine(55) in tRNA. Its function is as follows. Responsible for synthesis of pseudouridine from uracil-55 in the psi GC loop of transfer RNAs. The protein is tRNA pseudouridine synthase B of Haemophilus influenzae (strain ATCC 51907 / DSM 11121 / KW20 / Rd).